The following is a 670-amino-acid chain: C6 finger domain transcription factor iacK (670 aa).

The disordered stretch occupies residues 1 to 84 (MNTSPDYAQP…GEPKQSGPTV (84 aa)). Pro residues predominate over residues 44-54 (GPPPPPPPPPT). A compositionally biased stretch (low complexity) spans 55–74 (ATATAATAAATTTTAAPSAT). Positions 88–114 (CLACRSKHLKCDGGNPCARCQASESIC) form a DNA-binding region, zn(2)-C6 fungal-type. Residues 122 to 157 (GYKGPRRNGTQNPNKRHAAASDDGSPNSNGSNESCP) form a disordered region. The segment covering 142–155 (SDDGSPNSNGSNES) has biased composition (low complexity).

It is found in the nucleus. Its function is as follows. Transcription factor; part of the gene cluster that mediates the biosynthesis of iso-A82775C, a enylepoxycyclohexane and biosynthetic precursor of the chloropestolide anticancer natural products. This Pestalotiopsis fici (strain W106-1 / CGMCC3.15140) protein is C6 finger domain transcription factor iacK.